Reading from the N-terminus, the 156-residue chain is Eosinophil cationic protein 2 (156 aa).

Positions methionine 1–cysteine 25 are cleaved as a signal peptide. The active-site Proton acceptor is the histidine 38. 4 disulfide bridges follow: cysteine 47-cysteine 106, cysteine 61-cysteine 119, cysteine 79-cysteine 134, and cysteine 86-cysteine 94. Lysine 62 to threonine 66 is a substrate binding site. N-linked (GlcNAc...) asparagine glycosylation is found at asparagine 89, asparagine 96, and asparagine 107. The Proton donor role is filled by histidine 151.

Belongs to the pancreatic ribonuclease family.

Its subcellular location is the cytoplasmic granule. Functionally, cytotoxin and helminthotoxin with ribonuclease activity. Selectively chemotactic for dendritic cells. Possesses a wide variety of biological activities. This Mus musculus (Mouse) protein is Eosinophil cationic protein 2 (Ear2).